Reading from the N-terminus, the 184-residue chain is MSDIINETKSKMQKSIDNLSRELANISAGRANSNLLNGVNVDYYGAPTPVQQLASISVPEARLLVISPYDKSSVGNIEKAINAANLGVNPSSDGEVIRISVPALTEERRKELVKDVKKIGEDAKVAVRNVRRDSNDELKKQQKNSDITEDDLRTQTDDVQKLTDDSIKEVEKLLEEKEQDIMSV.

The interval 133–153 (DSNDELKKQQKNSDITEDDLR) is disordered.

Belongs to the RRF family.

The protein resides in the cytoplasm. In terms of biological role, responsible for the release of ribosomes from messenger RNA at the termination of protein biosynthesis. May increase the efficiency of translation by recycling ribosomes from one round of translation to another. The protein is Ribosome-recycling factor of Staphylococcus saprophyticus subsp. saprophyticus (strain ATCC 15305 / DSM 20229 / NCIMB 8711 / NCTC 7292 / S-41).